The sequence spans 245 residues: 1-(5-phosphoribosyl)-5-[(5-phosphoribosylamino)methylideneamino] imidazole-4-carboxamide isomerase (245 aa).

The active-site Proton acceptor is the Asp-7. Asp-129 serves as the catalytic Proton donor.

This sequence belongs to the HisA/HisF family.

It is found in the cytoplasm. The catalysed reaction is 1-(5-phospho-beta-D-ribosyl)-5-[(5-phospho-beta-D-ribosylamino)methylideneamino]imidazole-4-carboxamide = 5-[(5-phospho-1-deoxy-D-ribulos-1-ylimino)methylamino]-1-(5-phospho-beta-D-ribosyl)imidazole-4-carboxamide. The protein operates within amino-acid biosynthesis; L-histidine biosynthesis; L-histidine from 5-phospho-alpha-D-ribose 1-diphosphate: step 4/9. This is 1-(5-phosphoribosyl)-5-[(5-phosphoribosylamino)methylideneamino] imidazole-4-carboxamide isomerase from Edwardsiella ictaluri (strain 93-146).